We begin with the raw amino-acid sequence, 298 residues long: Probable D,D-dipeptide transport system permease protein DdpC (298 aa).

The Cytoplasmic segment spans residues 1-33 (MMLSEETSAVRPQKQTRFNGAKLVWMLKGSPLT). Residues 34 to 54 (VTSAVIIVLMLLMMIFSPWLA) form a helical membrane-spanning segment. At 55–96 (THDPNAIDLTARLLPPSAAHWFGTDEVGRDLFSRVLVGSQQS) the chain is on the periplasmic side. The chain crosses the membrane as a helical span at residues 97 to 117 (ILAGLVVVAIAGMIGSLLGCL). Residues 97–282 (ILAGLVVVAI…LTAVGFNLFG (186 aa)) enclose the ABC transmembrane type-1 domain. Residues 118–124 (SGVLGGR) are Cytoplasmic-facing. The next 2 helical transmembrane spans lie at 125–145 (ADAIIMRIMDIMLSIPSLVLT) and 146–166 (MALAAALGPSLFNAMLAIAIV). The Cytoplasmic segment spans residues 167-217 (RIPFYVRLARGQALVVRQYTYVQAAKTFGASRWHLINWHILRNSLPPLIVQ). The helical transmembrane segment at 218 to 238 (ASLDIGSAILMAATLGFIGLG) threads the bilayer. At 239-260 (AQQPSAEWGAMVANGRNYVLDQ) the chain is on the periplasmic side. A helical membrane pass occupies residues 261-281 (WWYCAFPGAAILLTAVGFNLF). Residues 282–298 (GDGIRDLLDPKAGGKQS) lie on the Cytoplasmic side of the membrane.

Belongs to the binding-protein-dependent transport system permease family. OppBC subfamily. In terms of assembly, the complex is composed of two ATP-binding proteins (DdpD and DdpF), two transmembrane proteins (DdpB and DdpC) and a solute-binding protein (DdpA).

Its subcellular location is the cell inner membrane. Its function is as follows. Part of the ABC transporter complex DdpABCDF, which is probably involved in D,D-dipeptide transport. Probably responsible for the translocation of the substrate across the membrane. This Escherichia coli (strain K12) protein is Probable D,D-dipeptide transport system permease protein DdpC (ddpC).